An 891-amino-acid chain; its full sequence is von Willebrand factor A domain-containing protein 7 (891 aa).

Residues 1–28 (MLPVEVPLSHLGPPILLLLQLLLPPTSA) form the signal peptide. N-linked (GlcNAc...) asparagine glycosylation occurs at N55. Residues 238–273 (PKPPGKCSHGGHFDQSSSQPPRGGINKDSTSPSFSP) form a disordered region. A VWFA domain is found at 314–499 (ASSLSFVLDT…DVAAIVGESM (186 aa)).

Expressed at low level in many tissues.

It is found in the secreted. In Mus musculus (Mouse), this protein is von Willebrand factor A domain-containing protein 7 (Vwa7).